The sequence spans 176 residues: Large ribosomal subunit protein uL30 (176 aa).

The protein belongs to the universal ribosomal protein uL30 family. Part of the 50S ribosomal subunit.

This chain is Large ribosomal subunit protein uL30, found in Pyrobaculum arsenaticum (strain DSM 13514 / JCM 11321 / PZ6).